We begin with the raw amino-acid sequence, 142 residues long: NTF2-related export protein 2 (142 aa).

Residues 17-136 (AAEEFVNIYY…WKIASDCFRF (120 aa)) form the NTF2 domain.

Associates with NXF1, NXF2, NXF3 and NXF5.

It localises to the nucleus. The protein localises to the cytoplasm. In terms of biological role, regulator of protein export for NES-containing proteins. Also plays a role in mRNA nuclear export. This is NTF2-related export protein 2 (NXT2) from Bos taurus (Bovine).